A 299-amino-acid polypeptide reads, in one-letter code: Peroxisomal biogenesis factor 19 (299 aa).

The disordered stretch occupies residues 1-63; it reads MAAAEGDGGV…SPGDTAKDAL (63 aa). Position 2 is an N-acetylalanine (Ala-2). The segment at 2-56 is docking to the peroxisome membrane and binding to PEX3; the sequence is AAAEGDGGVRAEADRELEELLESALDDFDKAKPSPAPPPTTTAPDASGPQKRSPG. A necessary for PEX19 function on peroxisome biogenesis region spans residues 2 to 91; that stretch reads AAAEGDGGVR…QATAEFEKAM (90 aa). A compositionally biased stretch (acidic residues) spans 16–27; that stretch reads RELEELLESALD. Phosphoserine is present on residues Ser-35, Ser-54, and Ser-66. Thr-236 is modified (phosphothreonine). The residue at position 296 (Cys-296) is a Cysteine methyl ester. Cys-296 carries the S-farnesyl cysteine lipid modification. The propeptide at 297–299 is removed in mature form; sequence LIM.

This sequence belongs to the peroxin-19 family. Interacts with a broad range of peroxisomal membrane proteins, including PEX3, PEX10, PEX11A, PEX11B, PEX12, PEX13, PEX14 and PEX16, PXMP2/PMP22, PXMP4/PMP24, SLC25A17/PMP34, ABCD1/ALDP, ABCD2/ALDRP, and ABCD3/PMP70. Also interacts with the tumor suppressor CDKN2A/p19ARF.

It is found in the cytoplasm. It localises to the peroxisome membrane. Its function is as follows. Necessary for early peroxisomal biogenesis. Acts both as a cytosolic chaperone and as an import receptor for peroxisomal membrane proteins (PMPs). Binds and stabilizes newly synthesized PMPs in the cytoplasm by interacting with their hydrophobic membrane-spanning domains, and targets them to the peroxisome membrane by binding to the integral membrane protein PEX3. Excludes CDKN2A from the nucleus and prevents its interaction with MDM2, which results in active degradation of TP53. The chain is Peroxisomal biogenesis factor 19 (PEX19) from Bos taurus (Bovine).